A 527-amino-acid chain; its full sequence is 4-alpha-glucanotransferase (527 aa).

It belongs to the disproportionating enzyme family.

The protein resides in the cytoplasm. It catalyses the reaction Transfers a segment of a (1-&gt;4)-alpha-D-glucan to a new position in an acceptor, which may be glucose or a (1-&gt;4)-alpha-D-glucan.. In Chlamydia muridarum (strain MoPn / Nigg), this protein is 4-alpha-glucanotransferase (malQ).